The chain runs to 450 residues: Phosphoglucosamine mutase (450 aa).

Ser-101 acts as the Phosphoserine intermediate in catalysis. Mg(2+) contacts are provided by Ser-101, Asp-241, Asp-243, and Asp-245. Ser-101 bears the Phosphoserine mark.

The protein belongs to the phosphohexose mutase family. Mg(2+) serves as cofactor. In terms of processing, activated by phosphorylation.

The catalysed reaction is alpha-D-glucosamine 1-phosphate = D-glucosamine 6-phosphate. Functionally, catalyzes the conversion of glucosamine-6-phosphate to glucosamine-1-phosphate. This Listeria welshimeri serovar 6b (strain ATCC 35897 / DSM 20650 / CCUG 15529 / CIP 8149 / NCTC 11857 / SLCC 5334 / V8) protein is Phosphoglucosamine mutase.